Consider the following 253-residue polypeptide: 5-oxoprolinase subunit A (253 aa).

It belongs to the LamB/PxpA family. Forms a complex composed of PxpA, PxpB and PxpC.

The enzyme catalyses 5-oxo-L-proline + ATP + 2 H2O = L-glutamate + ADP + phosphate + H(+). Catalyzes the cleavage of 5-oxoproline to form L-glutamate coupled to the hydrolysis of ATP to ADP and inorganic phosphate. The chain is 5-oxoprolinase subunit A from Bacillus cereus (strain Q1).